Reading from the N-terminus, the 67-residue chain is Probable tautomerase bsl7456 (67 aa).

The active-site Proton acceptor; via imino nitrogen is proline 2.

Belongs to the 4-oxalocrotonate tautomerase family.

The protein is Probable tautomerase bsl7456 of Bradyrhizobium diazoefficiens (strain JCM 10833 / BCRC 13528 / IAM 13628 / NBRC 14792 / USDA 110).